The primary structure comprises 523 residues: Pituitary adenylate cyclase-activating polypeptide type I receptor (523 aa).

Residues 1-19 (MARVLQLSLTALLLPVAIA) form the signal peptide. The Extracellular portion of the chain corresponds to 20-151 (MHSDCIFKKE…SGDQDYYYLS (132 aa)). Cystine bridges form between C33-C62, C53-C117, and C76-C133. Residues N47, N59, and N116 are each glycosylated (N-linked (GlcNAc...) asparagine). An important for ADCYAP1/PACAP ligand binding and specificity region spans residues 124–138 (EPFPHYFDACGFDDY). The interval 124 to 138 (EPFPHYFDACGFDDY) is important for ligand binding and specificity. The helical transmembrane segment at 152–176 (VKALYTVGYSTSLATLTTAMVILCR) threads the bilayer. At 177-186 (FRKLHCTRNF) the chain is on the cytoplasmic side. The chain crosses the membrane as a helical span at residues 187-207 (IHMNLFVSFMLRAISVFIKDW). Residues 208–222 (ILYAEQDSSHCFVST) are Extracellular-facing. The chain crosses the membrane as a helical span at residues 223 to 248 (VECKAVMVFFHYCVVSNYFWLFIEGL). Cysteines 225 and 295 form a disulfide. The Cytoplasmic segment spans residues 249-266 (YLFTLLVETFFPERRYFY). Residues 267-289 (WYTIIGWGTPTVCVTVWAVLRLY) traverse the membrane as a helical segment. Over 290-301 (FDDAGCWDMNDS) the chain is Extracellular. The helical transmembrane segment at 302 to 328 (TALWWVIKGPVVGSIMVNFVLFIGIII) threads the bilayer. Residues 329 to 346 (ILVQKLQSPDMGGNESSI) lie on the Cytoplasmic side of the membrane. The chain crosses the membrane as a helical span at residues 347-429 (YLTNLRLRVP…HYTVFAFSPE (83 aa)). At 430-434 (NVSKR) the chain is on the extracellular side. A helical membrane pass occupies residues 435 to 458 (ERLVFELGLGSFQGFVVAVLYCFL). Residues 459-523 (NGEVQAEIKR…SSLPADNLAT (65 aa)) lie on the Cytoplasmic side of the membrane. A phosphoserine mark is found at S489 and S502.

It belongs to the G-protein coupled receptor 2 family. As to quaternary structure, interacts with maxadilan, a vasodilator peptide from Lutzomyia longipalpis saliva; the interaction results in ADCYAP1R1 activation. Hypothalamus, anterior pituitary, adrenal medulla, testicular germ cells.

The protein localises to the cell membrane. G protein-coupled receptor activated by the neuropeptide pituitary adenylate cyclase-activating polypeptide (ADCYAP1/PACAP). Binds both PACAP27 and PACAP38 bioactive peptides. Ligand binding causes a conformation change that triggers signaling via guanine nucleotide-binding proteins (G proteins) and modulates the activity of downstream effectors. Activates cAMP-dependent pathway. May regulate the release of adrenocorticotropin, luteinizing hormone, growth hormone, prolactin, epinephrine, and catecholamine. May play a role in spermatogenesis and sperm motility. Causes smooth muscle relaxation and secretion in the gastrointestinal tract. In Rattus norvegicus (Rat), this protein is Pituitary adenylate cyclase-activating polypeptide type I receptor.